Consider the following 71-residue polypeptide: Small ribosomal subunit protein bS18 (71 aa).

The protein belongs to the bacterial ribosomal protein bS18 family. Part of the 30S ribosomal subunit. Forms a tight heterodimer with protein bS6.

Binds as a heterodimer with protein bS6 to the central domain of the 16S rRNA, where it helps stabilize the platform of the 30S subunit. This is Small ribosomal subunit protein bS18 from Nostoc punctiforme (strain ATCC 29133 / PCC 73102).